The following is a 233-amino-acid chain: Protein Thf1 (233 aa).

Residues 183-205 (DKLSKDLELYRSNLDKMTQALAV) adopt a coiled-coil conformation. The interval 213–233 (DRKKREQRQQQASTPVAPPNE) is disordered.

This sequence belongs to the THF1 family.

May be involved in photosynthetic membrane biogenesis. The protein is Protein Thf1 of Trichormus variabilis (strain ATCC 29413 / PCC 7937) (Anabaena variabilis).